The sequence spans 505 residues: Envelope glycoprotein C homolog (505 aa).

Positions 1 to 27 (MLTPRVLRALGWTGLFFLLLSPSNVLG) are cleaved as a signal peptide. The Virion surface segment spans residues 28–464 (ASLSRDLEHP…DATPSARGTP (437 aa)). The N-linked (GlcNAc...) asparagine; by host glycan is linked to Asn-45. The segment at 51 to 85 (APLTEVPHAPSTESVSTNSESTNEHTITETTGKNA) is disordered. Residues 61–71 (STESVSTNSES) show a composition bias toward low complexity. N-linked (GlcNAc...) asparagine; by host glycans are attached at residues Asn-90, Asn-99, Asn-119, Asn-211, Asn-353, Asn-399, and Asn-428. The Ig-like domain maps to 257–355 (PASVDVLAPP…GDMISTTNAT (99 aa)). Residues 465–491 (MVITVNGSFGIGCNFRVGDNHDCPMFI) traverse the membrane as a helical segment. Over 492 to 505 (HSTRKIFDYNLIVM) the chain is Cytoplasmic.

This sequence belongs to the herpesviridae glycoprotein C family.

Its subcellular location is the secreted. It localises to the host cell membrane. In terms of biological role, may play an immunoevasive role in the pathogenesis of Marek's disease. It is a candidate for causing the early-stage immunosuppression that occurs after MDHV infection. The polypeptide is Envelope glycoprotein C homolog (gC) (Gallid herpesvirus 2 (strain GA) (GaHV-2)).